Reading from the N-terminus, the 518-residue chain is Nuclear receptor ROR-gamma (518 aa).

The modulating stretch occupies residues 1–30; sequence MDRAPQRQHQASRELLAAKKTHTSQIEVIP. 2 consecutive NR C4-type zinc fingers follow at residues 31 to 51 and 67 to 91; these read CKIC…CEGC and CTRQ…LQKC. Positions 31 to 96 form a DNA-binding region, nuclear receptor; that stretch reads CKICGDKSSG…RLQKCLALGM (66 aa). 2 disordered regions span residues 105–183 and 238–258; these read RMSK…SGSG and HPGL…SFRS. Positions 109 to 118 are enriched in basic and acidic residues; the sequence is KQRDSLHAEV. Over residues 119-130 the composition is skewed to low complexity; sequence QKQLQQRQQQQQ. The NR LBD domain maps to 269-508; that stretch reads EIEHLVQSVC…PPLYKELFST (240 aa). The short motif at 501-506 is the AF-2 element; that stretch reads LYKELF.

The protein belongs to the nuclear hormone receptor family. NR1 subfamily. Interacts (via AF-2 motif) with the coactivators NCOA1, NCOA2 and PPARGC1A (via LXXLL motif). Interacts with the corepressor NCOR1. Interacts with CRY1. Interacts (via AF-2 motif) with PROX1. Interacts with FOXP3. Interacts with NR0B2.

The protein localises to the nucleus. Functionally, nuclear receptor that binds DNA as a monomer to ROR response elements (RORE) containing a single core motif half-site 5'-AGGTCA-3' preceded by a short A-T-rich sequence. Key regulator of cellular differentiation, immunity, peripheral circadian rhythm as well as lipid, steroid, xenobiotics and glucose metabolism. Considered to have intrinsic transcriptional activity, have some natural ligands like oxysterols that act as agonists (25-hydroxycholesterol) or inverse agonists (7-oxygenated sterols), enhancing or repressing the transcriptional activity, respectively. Recruits distinct combinations of cofactors to target gene regulatory regions to modulate their transcriptional expression, depending on the tissue, time and promoter contexts. Regulates the circadian expression of clock genes such as CRY1, BMAL1 and NR1D1 in peripheral tissues and in a tissue-selective manner. Competes with NR1D1 for binding to their shared DNA response element on some clock genes such as BMAL1, CRY1 and NR1D1 itself, resulting in NR1D1-mediated repression or RORC-mediated activation of the expression, leading to the circadian pattern of clock genes expression. Therefore influences the period length and stability of the clock. Involved in the regulation of the rhythmic expression of genes involved in glucose and lipid metabolism, including PLIN2 and AVPR1A. Negative regulator of adipocyte differentiation through the regulation of early phase genes expression, such as MMP3. Controls adipogenesis as well as adipocyte size and modulates insulin sensitivity in obesity. In liver, has specific and redundant functions with RORA as positive or negative modulator of expression of genes encoding phase I and Phase II proteins involved in the metabolism of lipids, steroids and xenobiotics, such as SULT1E1. Also plays a role in the regulation of hepatocyte glucose metabolism through the regulation of G6PC1 and PCK1. Essential for thymopoiesis and the development of several secondary lymphoid tissues, including lymph nodes and Peyer's patches. Required for the generation of LTi (lymphoid tissue inducer) cells. Regulates thymocyte survival through DNA-binding on ROREs of target gene promoter regions and recruitment of coactivaros via the AF-2. Also plays a key role, downstream of IL6 and TGFB and synergistically with RORA, for lineage specification of uncommitted CD4(+) T-helper (T(H)) cells into T(H)17 cells, antagonizing the T(H)1 program. Probably regulates IL17 and IL17F expression on T(H) by binding to the essential enhancer conserved non-coding sequence 2 (CNS2) in the IL17-IL17F locus. May also play a role in the pre-TCR activation cascade leading to the maturation of alpha/beta T-cells and may participate in the regulation of DNA accessibility in the TCR-J(alpha) locus. Regulates the rhythmic expression of PROX1 and promotes its nuclear localization. Plays an indispensable role in the induction of IFN-gamma dependent anti-mycobacterial systemic immunity. In Pongo abelii (Sumatran orangutan), this protein is Nuclear receptor ROR-gamma (RORC).